The primary structure comprises 303 residues: UDP-3-O-acyl-N-acetylglucosamine deacetylase (303 aa).

Residues histidine 78, histidine 237, and aspartate 241 each coordinate Zn(2+). Catalysis depends on histidine 264, which acts as the Proton donor.

Belongs to the LpxC family. Requires Zn(2+) as cofactor.

It carries out the reaction a UDP-3-O-[(3R)-3-hydroxyacyl]-N-acetyl-alpha-D-glucosamine + H2O = a UDP-3-O-[(3R)-3-hydroxyacyl]-alpha-D-glucosamine + acetate. It functions in the pathway glycolipid biosynthesis; lipid IV(A) biosynthesis; lipid IV(A) from (3R)-3-hydroxytetradecanoyl-[acyl-carrier-protein] and UDP-N-acetyl-alpha-D-glucosamine: step 2/6. Functionally, catalyzes the hydrolysis of UDP-3-O-myristoyl-N-acetylglucosamine to form UDP-3-O-myristoylglucosamine and acetate, the committed step in lipid A biosynthesis. This Pseudomonas aeruginosa (strain LESB58) protein is UDP-3-O-acyl-N-acetylglucosamine deacetylase.